Here is a 571-residue protein sequence, read N- to C-terminus: Proline--tRNA ligase (571 aa).

It belongs to the class-II aminoacyl-tRNA synthetase family. ProS type 1 subfamily. As to quaternary structure, homodimer.

It is found in the cytoplasm. It carries out the reaction tRNA(Pro) + L-proline + ATP = L-prolyl-tRNA(Pro) + AMP + diphosphate. In terms of biological role, catalyzes the attachment of proline to tRNA(Pro) in a two-step reaction: proline is first activated by ATP to form Pro-AMP and then transferred to the acceptor end of tRNA(Pro). As ProRS can inadvertently accommodate and process non-cognate amino acids such as alanine and cysteine, to avoid such errors it has two additional distinct editing activities against alanine. One activity is designated as 'pretransfer' editing and involves the tRNA(Pro)-independent hydrolysis of activated Ala-AMP. The other activity is designated 'posttransfer' editing and involves deacylation of mischarged Ala-tRNA(Pro). The misacylated Cys-tRNA(Pro) is not edited by ProRS. The protein is Proline--tRNA ligase of Shewanella frigidimarina (strain NCIMB 400).